Reading from the N-terminus, the 375-residue chain is Chaperone protein DnaJ (375 aa).

Residues 5–70 (DFYETLGVAK…QKRAAYDRYG (66 aa)) enclose the J domain. The segment at 136–214 (GKTAQIRVPT…CHGQGRVTEE (79 aa)) adopts a CR-type zinc-finger fold. Residues C149, C152, C166, C169, C188, C191, C202, and C205 each contribute to the Zn(2+) site. 4 CXXCXGXG motif repeats span residues 149–156 (CDVCSGSG), 166–173 (CGTCQGTG), 188–195 (CPTCHGRG), and 202–209 (CPKCHGQG).

It belongs to the DnaJ family. As to quaternary structure, homodimer. It depends on Zn(2+) as a cofactor.

Its subcellular location is the cytoplasm. Participates actively in the response to hyperosmotic and heat shock by preventing the aggregation of stress-denatured proteins and by disaggregating proteins, also in an autonomous, DnaK-independent fashion. Unfolded proteins bind initially to DnaJ; upon interaction with the DnaJ-bound protein, DnaK hydrolyzes its bound ATP, resulting in the formation of a stable complex. GrpE releases ADP from DnaK; ATP binding to DnaK triggers the release of the substrate protein, thus completing the reaction cycle. Several rounds of ATP-dependent interactions between DnaJ, DnaK and GrpE are required for fully efficient folding. Also involved, together with DnaK and GrpE, in the DNA replication of plasmids through activation of initiation proteins. The chain is Chaperone protein DnaJ from Rhizobium johnstonii (strain DSM 114642 / LMG 32736 / 3841) (Rhizobium leguminosarum bv. viciae).